Reading from the N-terminus, the 182-residue chain is uncharacterized protein (182 aa).

The next 2 membrane-spanning stretches (helical) occupy residues 58 to 78 (ILFGFMIIALISFNILLYVVY) and 81 to 101 (PVSITSIIAEILIIISMIIIW).

The protein to M.jannaschii MJ0803.

Its subcellular location is the cell membrane. This is an uncharacterized protein from Methanocaldococcus jannaschii (strain ATCC 43067 / DSM 2661 / JAL-1 / JCM 10045 / NBRC 100440) (Methanococcus jannaschii).